Here is a 529-residue protein sequence, read N- to C-terminus: Peptide chain release factor 3 (529 aa).

The tr-type G domain occupies A11–M280. GTP contacts are provided by residues S20–T27, D88–H92, and N142–D145.

This sequence belongs to the TRAFAC class translation factor GTPase superfamily. Classic translation factor GTPase family. PrfC subfamily.

Its subcellular location is the cytoplasm. Increases the formation of ribosomal termination complexes and stimulates activities of RF-1 and RF-2. It binds guanine nucleotides and has strong preference for UGA stop codons. It may interact directly with the ribosome. The stimulation of RF-1 and RF-2 is significantly reduced by GTP and GDP, but not by GMP. This chain is Peptide chain release factor 3, found in Salmonella arizonae (strain ATCC BAA-731 / CDC346-86 / RSK2980).